We begin with the raw amino-acid sequence, 292 residues long: Claudin-23 (292 aa).

Residues 1-3 are Cytoplasmic-facing; that stretch reads MRT. A helical transmembrane segment spans residues 4–24; the sequence is PVVMTLGMVLAPCGLLLNLTG. Residues 25–81 lie on the Extracellular side of the membrane; the sequence is TLAPGWRLVKGFLNQPVDVELYQGLWDMCREQSSRERECGQTDQWGYFEAQPVLVAR. A helical transmembrane segment spans residues 82–102; the sequence is ALMVTSLAATVLGLLLASLGV. The Cytoplasmic portion of the chain corresponds to 103 to 110; sequence RCWQDEPN. The helical transmembrane segment at 111 to 131 threads the bilayer; sequence FVLAGLSGVVLFVAGLLGLIP. The Extracellular segment spans residues 132–160; it reads VSWYNHFLGDRDVLPAPASPVTVQVSYSL. Residues 161-181 traverse the membrane as a helical segment; it reads VLGYLGSCLLLLGGFSLALSF. Topologically, residues 182-292 are cytoplasmic; that stretch reads APWCDERCRR…DSSLPCDSDL (111 aa). The segment at 222–292 is disordered; the sequence is KYYSDGQHRP…DSSLPCDSDL (71 aa). The span at 273-282 shows a compositional bias: polar residues; the sequence is DAPSCSTHPC.

The protein belongs to the claudin family. In terms of tissue distribution, expressed in germinal center B-cells, placenta, stomach as well as in colon tumor.

The protein localises to the cell junction. Its subcellular location is the tight junction. It is found in the cell membrane. Plays a major role in tight junction-specific obliteration of the intercellular space, through calcium-independent cell-adhesion activity. The chain is Claudin-23 (CLDN23) from Homo sapiens (Human).